The chain runs to 192 residues: UPF0149 protein YE3397 (192 aa).

The protein belongs to the UPF0149 family.

The protein is UPF0149 protein YE3397 of Yersinia enterocolitica serotype O:8 / biotype 1B (strain NCTC 13174 / 8081).